Here is a 350-residue protein sequence, read N- to C-terminus: Peptide-N(4)-(N-acetyl-beta-glucosaminyl)asparagine amidase (350 aa).

Zn(2+) is bound by residues cysteine 123, cysteine 126, cysteine 157, and cysteine 160. The active-site Nucleophile is the cysteine 183. Catalysis depends on residues histidine 210 and aspartate 227. Glutamate 230 provides a ligand contact to substrate. The disordered stretch occupies residues 324–350 (EIPPAAGAAGRQSGSADWKRQRGEDGR). Basic and acidic residues predominate over residues 340-350 (DWKRQRGEDGR).

This sequence belongs to the transglutaminase-like superfamily. PNGase family. Zn(2+) is required as a cofactor.

The protein localises to the cytoplasm. The catalysed reaction is Hydrolysis of an N(4)-(acetyl-beta-D-glucosaminyl)asparagine residue in which the glucosamine residue may be further glycosylated, to yield a (substituted) N-acetyl-beta-D-glucosaminylamine and a peptide containing an aspartate residue.. Its function is as follows. Specifically deglycosylates the denatured form of N-linked glycoproteins in the cytoplasm and assists their proteasome-mediated degradation. Cleaves the beta-aspartyl-glucosamine (GlcNAc) of the glycan and the amide side chain of Asn, converting Asn to Asp. Prefers proteins containing high-mannose over those bearing complex type oligosaccharides. Can recognize misfolded proteins in the endoplasmic reticulum that are exported to the cytosol to be destroyed and deglycosylate them, while it has no activity toward native proteins. Deglycosylation is a prerequisite for subsequent proteasome-mediated degradation of some, but not all, misfolded glycoproteins. This chain is Peptide-N(4)-(N-acetyl-beta-glucosaminyl)asparagine amidase (PNG1), found in Eremothecium gossypii (strain ATCC 10895 / CBS 109.51 / FGSC 9923 / NRRL Y-1056) (Yeast).